We begin with the raw amino-acid sequence, 887 residues long: Beta-galactosidase 9 (887 aa).

The first 30 residues, 1-30 (MAESIRTFSLQWRILSLIIALLVYFPILSG), serve as a signal peptide directing secretion. N37 carries N-linked (GlcNAc...) asparagine glycosylation. The active-site Proton donor is E194. Catalysis depends on E263, which acts as the Nucleophile. Residues N463, N485, N496, N527, and N785 are each glycosylated (N-linked (GlcNAc...) asparagine). One can recognise an SUEL-type lectin domain in the interval 791 to 877 (NSVAPEVHLH…KTLAVMSRCS (87 aa)). N881 is a glycosylation site (N-linked (GlcNAc...) asparagine).

The protein belongs to the glycosyl hydrolase 35 family. In terms of tissue distribution, ubiquitous, with higher expression levels in siliques.

It localises to the secreted. The protein resides in the extracellular space. The protein localises to the apoplast. It carries out the reaction Hydrolysis of terminal non-reducing beta-D-galactose residues in beta-D-galactosides.. In Arabidopsis thaliana (Mouse-ear cress), this protein is Beta-galactosidase 9 (BGAL9).